Reading from the N-terminus, the 224-residue chain is Oxygen-evolving enhancer protein 3-1, chloroplastic (224 aa).

A chloroplast-targeting transit peptide spans 1-44 (MASMGGLHGASPAVLEGSLKINGSSRLNGSGRVAVAQRSRLVVR). A thylakoid-targeting transit peptide spans 45-75 (AQQSEETSRRSVIGLVAAGLAGGSFVQAVLA). At Thr189 the chain carries Phosphothreonine. Phosphotyrosine is present on Tyr209. Thr212 carries the phosphothreonine modification.

This sequence belongs to the PsbQ family. As to expression, expressed in green tissue, with high steady-state mRNA levels in leaves. Not expressed in roots.

It localises to the plastid. The protein resides in the chloroplast thylakoid membrane. Functionally, required for photosystem II assembly/stability and photoautotrophic growth under low light conditions. The polypeptide is Oxygen-evolving enhancer protein 3-1, chloroplastic (PSBQ1) (Arabidopsis thaliana (Mouse-ear cress)).